The sequence spans 81 residues: ATP synthase subunit C, plastid (81 aa).

Transmembrane regions (helical) follow at residues P3–G23 and L57–A77.

Belongs to the ATPase C chain family. F-type ATPases have 2 components, F(1) - the catalytic core - and F(0) - the membrane proton channel. F(1) has five subunits: alpha(3), beta(3), gamma(1), delta(1), epsilon(1). F(0) has four main subunits: a(1), b(1), b'(1) and c(10-14). The alpha and beta chains form an alternating ring which encloses part of the gamma chain. F(1) is attached to F(0) by a central stalk formed by the gamma and epsilon chains, while a peripheral stalk is formed by the delta, b and b' chains.

The protein localises to the plastid membrane. Functionally, f(1)F(0) ATP synthase produces ATP from ADP in the presence of a proton or sodium gradient. F-type ATPases consist of two structural domains, F(1) containing the extramembraneous catalytic core and F(0) containing the membrane proton channel, linked together by a central stalk and a peripheral stalk. During catalysis, ATP synthesis in the catalytic domain of F(1) is coupled via a rotary mechanism of the central stalk subunits to proton translocation. Key component of the F(0) channel; it plays a direct role in translocation across the membrane. A homomeric c-ring of between 10-14 subunits forms the central stalk rotor element with the F(1) delta and epsilon subunits. The protein is ATP synthase subunit C, plastid of Cuscuta gronovii (Common dodder).